A 103-amino-acid polypeptide reads, in one-letter code: Phosphoribosyl-ATP pyrophosphatase (103 aa).

Belongs to the PRA-PH family.

It is found in the cytoplasm. The enzyme catalyses 1-(5-phospho-beta-D-ribosyl)-ATP + H2O = 1-(5-phospho-beta-D-ribosyl)-5'-AMP + diphosphate + H(+). The protein operates within amino-acid biosynthesis; L-histidine biosynthesis; L-histidine from 5-phospho-alpha-D-ribose 1-diphosphate: step 2/9. The sequence is that of Phosphoribosyl-ATP pyrophosphatase from Cereibacter sphaeroides (strain ATCC 17025 / ATH 2.4.3) (Rhodobacter sphaeroides).